Consider the following 153-residue polypeptide: Troponin C (153 aa).

EF-hand domains follow at residues 9–44, 45–80, 85–120, and 121–153; these read EQVQ…LGQT, FEEN…FLVE, AMQE…LDDK, and LTED…MTGD. Residues Asp-58, Asp-60, Ser-62, Glu-64, and Glu-69 each contribute to the Ca(2+) site. Ca(2+) contacts are provided by Asp-134, Asp-136, Ser-138, Thr-140, and Glu-145.

It belongs to the troponin C family.

Troponin is the central regulatory protein of striated muscle contraction. Tn consists of three components: Tn-I which is the inhibitor of actomyosin ATPase, Tn-T which contains the binding site for tropomyosin and Tn-C. The binding of calcium to Tn-C abolishes the inhibitory action of Tn on actin filaments. This Tyrophagus putrescentiae (Mold mite) protein is Troponin C.